Consider the following 198-residue polypeptide: Eukaryotic translation initiation factor isoform 4E (198 aa).

Residues Met1–Pro25 are disordered. Ala2 carries the N-acetylalanine modification. A compositionally biased stretch (low complexity) spans Glu8–Thr19. MRNA-binding positions include Trp46–Gly47 and Trp92–Glu93. Cys97 and Cys138 form a disulfide bridge. An mRNA-binding site is contributed by Arg145–Lys152.

The protein belongs to the eukaryotic initiation factor 4E family. As to quaternary structure, EIF4F is a multi-subunit complex, the composition of which varies with external and internal environmental conditions. It is composed of at least EIF4A, EIF4E and EIF4G. EIF4E is also known to interact with other partners. In higher plants two isoforms of EIF4F have been identified, named isoform EIF4F and isoform EIF(iso)4F. Isoform EIF4F has subunits p220 and p26, whereas isoform EIF(iso)4F has subunits p82 and p28. This isoform interacts with the viral protein genome linked (VPg)-proteinase of turnip mosaic potyvirus. Interacts directly with LOX2. Interacts with BTF3. In terms of processing, according to the redox status, the Cys-97-Cys-138 disulfide bridge may have a role in regulating protein function by affecting its ability to bind capped mRNA. In terms of tissue distribution, abundant in floral organs and in young developing tissues.

In terms of biological role, recognizes and binds the 7-methylguanosine-containing mRNA cap during an early step in the initiation of protein synthesis and facilitates ribosome binding by inducing the unwinding of the mRNAs secondary structures. Mediates susceptibility to Turnipmosaic potyvirus (TuMV) and Tobacco etch potyvirus (TEV). The sequence is that of Eukaryotic translation initiation factor isoform 4E (EIF(ISO)4E) from Arabidopsis thaliana (Mouse-ear cress).